We begin with the raw amino-acid sequence, 345 residues long: Sesquiterpene synthase PILCRDRAFT_825684 (345 aa).

Residues aspartate 91, asparagine 226, serine 230, and glutamate 234 each contribute to the Mg(2+) site. The DDXXD motif signature appears at 91 to 95 (DELTD). Arginine 316 and tyrosine 317 together coordinate (2E,6E)-farnesyl diphosphate.

The protein belongs to the terpene synthase family. Requires Mg(2+) as cofactor.

It catalyses the reaction (2E,6E)-farnesyl diphosphate = viridiflorene + diphosphate. Its function is as follows. Terpene cyclase that catalyzes the cyclization of farnesyl diphosphate (FPP) to various sesquiterpenes, including beta-elemene, viridiflorene and gamma-cadinene. Gamma-cadinene is the major product of PILCRDRAFT_825684. In Piloderma croceum (strain F 1598), this protein is Sesquiterpene synthase PILCRDRAFT_825684.